The sequence spans 881 residues: Alanine--tRNA ligase (881 aa).

4 residues coordinate Zn(2+): histidine 568, histidine 572, cysteine 670, and histidine 674.

It belongs to the class-II aminoacyl-tRNA synthetase family. Zn(2+) serves as cofactor.

The protein localises to the cytoplasm. It carries out the reaction tRNA(Ala) + L-alanine + ATP = L-alanyl-tRNA(Ala) + AMP + diphosphate. Functionally, catalyzes the attachment of alanine to tRNA(Ala) in a two-step reaction: alanine is first activated by ATP to form Ala-AMP and then transferred to the acceptor end of tRNA(Ala). Also edits incorrectly charged Ser-tRNA(Ala) and Gly-tRNA(Ala) via its editing domain. This chain is Alanine--tRNA ligase, found in Moorella thermoacetica (strain ATCC 39073 / JCM 9320).